The primary structure comprises 59 residues: U-scoloptoxin(23)-Er2a (59 aa).

Belongs to the scoloptoxin-23 family. In terms of processing, contains 1 disulfide bond. Expressed by the venom gland.

The protein resides in the secreted. This Ethmostigmus rubripes (Giant centipede) protein is U-scoloptoxin(23)-Er2a.